The chain runs to 737 residues: Palmitoyltransferase akr1 (737 aa).

The segment covering 1–15 (MSSGNSSTGTHTNGN) has biased composition (low complexity). Positions 1–39 (MSSGNSSTGTHTNGNFATLGSSPPSAVGGKGRAIPPKVT) are disordered. Topologically, residues 1–313 (MSSGNSSTGT…WVRNKSLMSK (313 aa)) are cytoplasmic. ANK repeat units follow at residues 96–125 (EGIT…DVNA), 130–159 (SVAT…DPLL), 163–192 (QGYN…PVDV), 196–225 (QGHT…HANA), and 228–258 (EGGL…DKFA). The next 2 membrane-spanning stretches (helical) occupy residues 314–334 (FFFL…SNMV) and 335–355 (VYAA…VAQK). The Cytoplasmic portion of the chain corresponds to 356–374 (AASQGPSEYRILQKTPYLS). The helical transmembrane segment at 375-395 (GVFAGSLFWVGFRYVFYVLPV) threads the bilayer. Residues 396–401 (TYSTSP) are Lumenal-facing. A helical membrane pass occupies residues 402-422 (ILNGLFAIFFSLTTYFYIYSM). The Cytoplasmic segment spans residues 423–498 (VEDPGFVPKL…DNCVGANNLR (76 aa)). One can recognise a DHHC domain in the interval 455–505 (NFCVSCMVRRPLRSKHCKRCARCVAKHDHHCPWIDNCVGANNLRHFVLYIT). The active-site S-palmitoyl cysteine intermediate is the Cys-485. A helical membrane pass occupies residues 499-519 (HFVLYITCLEVGIVLFVQLTF). Over 520 to 548 (NYINSLPAPAQPQCNIINETLCDFVLRDT) the chain is Lumenal. Residues 549–569 (FTLVLDLWVCIQLVWITMLVA) traverse the membrane as a helical segment. At 570–737 (VQMIQISRNQ…LSVEDPEQGV (168 aa)) the chain is on the cytoplasmic side.

The protein belongs to the DHHC palmitoyltransferase family. AKR/ZDHHC17 subfamily.

It is found in the early endosome membrane. The protein localises to the golgi apparatus membrane. It carries out the reaction L-cysteinyl-[protein] + hexadecanoyl-CoA = S-hexadecanoyl-L-cysteinyl-[protein] + CoA. In terms of biological role, palmitoyltransferase specific for casein kinase 1. The sequence is that of Palmitoyltransferase akr1 (akr1) from Aspergillus oryzae (strain ATCC 42149 / RIB 40) (Yellow koji mold).